Reading from the N-terminus, the 762-residue chain is 5-methyltetrahydropteroyltriglutamate--homocysteine methyltransferase (762 aa).

5-methyltetrahydropteroyltri-L-glutamate-binding positions include 17-20 (REWK) and Lys111. Residues 435–437 (IGS) and Glu488 contribute to the L-homocysteine site. Residues 435–437 (IGS) and Glu488 contribute to the L-methionine site. 5-methyltetrahydropteroyltri-L-glutamate is bound by residues 519-520 (RC) and Trp565. Asp603 is an L-homocysteine binding site. Asp603 contributes to the L-methionine binding site. Glu609 serves as a coordination point for 5-methyltetrahydropteroyltri-L-glutamate. 3 residues coordinate Zn(2+): His645, Cys647, and Glu669. His698 serves as the catalytic Proton donor. Cys730 contacts Zn(2+).

The protein belongs to the vitamin-B12 independent methionine synthase family. The cofactor is Zn(2+).

The catalysed reaction is 5-methyltetrahydropteroyltri-L-glutamate + L-homocysteine = tetrahydropteroyltri-L-glutamate + L-methionine. The protein operates within amino-acid biosynthesis; L-methionine biosynthesis via de novo pathway; L-methionine from L-homocysteine (MetE route): step 1/1. Functionally, catalyzes the transfer of a methyl group from 5-methyltetrahydrofolate to homocysteine resulting in methionine formation. This Bacillus cereus (strain ATCC 10987 / NRS 248) protein is 5-methyltetrahydropteroyltriglutamate--homocysteine methyltransferase.